The chain runs to 154 residues: Ribosome maturation factor RimP (154 aa).

Belongs to the RimP family.

The protein localises to the cytoplasm. Required for maturation of 30S ribosomal subunits. The sequence is that of Ribosome maturation factor RimP from Flavobacterium psychrophilum (strain ATCC 49511 / DSM 21280 / CIP 103535 / JIP02/86).